A 331-amino-acid chain; its full sequence is Ribosomal RNA small subunit methyltransferase H (331 aa).

Residues 38-40 (GGY), Asp56, Phe83, Asp100, and Gln107 contribute to the S-adenosyl-L-methionine site. Residues 308 to 331 (TDAPAGPVDPQVLGMPLIPKKGRR) are disordered.

It belongs to the methyltransferase superfamily. RsmH family.

The protein localises to the cytoplasm. The enzyme catalyses cytidine(1402) in 16S rRNA + S-adenosyl-L-methionine = N(4)-methylcytidine(1402) in 16S rRNA + S-adenosyl-L-homocysteine + H(+). Functionally, specifically methylates the N4 position of cytidine in position 1402 (C1402) of 16S rRNA. This chain is Ribosomal RNA small subunit methyltransferase H, found in Cereibacter sphaeroides (strain ATCC 17025 / ATH 2.4.3) (Rhodobacter sphaeroides).